A 340-amino-acid chain; its full sequence is Ubiquitin-like domain-containing CTD phosphatase (340 aa).

The Ubiquitin-like domain maps to Leu24–Asp101. An FCP1 homology domain is found at Cys151 to Ile312. The phosphatase stretch occupies residues Cys151–Ile312. Residues Asp161, Asp163, and Asp271 each contribute to the Mg(2+) site.

Mg(2+) serves as cofactor.

The protein resides in the nucleus. It carries out the reaction O-phospho-L-seryl-[protein] + H2O = L-seryl-[protein] + phosphate. The enzyme catalyses O-phospho-L-threonyl-[protein] + H2O = L-threonyl-[protein] + phosphate. Its function is as follows. Dephosphorylates 26S nuclear proteasomes, thereby decreasing their proteolytic activity. The dephosphorylation may prevent assembly of the core and regulatory particles (CP and RP) into mature 26S proteasome. The sequence is that of Ubiquitin-like domain-containing CTD phosphatase from Arabidopsis thaliana (Mouse-ear cress).